The chain runs to 544 residues: Membrane protein insertase YidC (544 aa).

The next 5 helical transmembrane spans lie at 6-26 (NILLIGLLFVSFLLWQQWQTD), 345-365 (LLMFFQSIVGNWGAAIILITL), 423-443 (GGCLPILLQMPIFIALYWVLL), 460-480 (LSVQDPYYVMPILMGVSMFVM), and 503-523 (VVFTVFFLWFPAGLVLYWLVG).

The protein belongs to the OXA1/ALB3/YidC family. Type 1 subfamily. As to quaternary structure, interacts with the Sec translocase complex via SecD. Specifically interacts with transmembrane segments of nascent integral membrane proteins during membrane integration.

The protein localises to the cell inner membrane. In terms of biological role, required for the insertion and/or proper folding and/or complex formation of integral membrane proteins into the membrane. Involved in integration of membrane proteins that insert both dependently and independently of the Sec translocase complex, as well as at least some lipoproteins. Aids folding of multispanning membrane proteins. In Shewanella woodyi (strain ATCC 51908 / MS32), this protein is Membrane protein insertase YidC.